The sequence spans 92 residues: Small ribosomal subunit protein uS17 (92 aa).

The protein belongs to the universal ribosomal protein uS17 family. In terms of assembly, part of the 30S ribosomal subunit.

Its function is as follows. One of the primary rRNA binding proteins, it binds specifically to the 5'-end of 16S ribosomal RNA. This Bordetella petrii (strain ATCC BAA-461 / DSM 12804 / CCUG 43448) protein is Small ribosomal subunit protein uS17.